The primary structure comprises 336 residues: Poly(A) RNA polymerase cid12 (336 aa).

Positions 77 and 79 each coordinate Mg(2+). In terms of domain architecture, PAP-associated spans 209–263 (ALLQKFFYFWGVEWTYELFVLRPLTGQIVPKLQKGWLNEVQPNLLSIEDPIDRNN). The residue at position 325 (S325) is a Phosphoserine. T327 is subject to Phosphothreonine. A Phosphoserine modification is found at S329.

The protein belongs to the DNA polymerase type-B-like family. As to quaternary structure, cid12, hrr1 and rdp1 interact forming the RNA-directed RNA polymerase complex (RDRC). The RDRC complex interacts with the RITS complex via interaction between ago1 and hrr1. Clr4 has a role in mediating this interaction. Mg(2+) is required as a cofactor. The cofactor is Mn(2+).

It localises to the cytoplasm. The protein resides in the nucleus. The enzyme catalyses RNA(n) + ATP = RNA(n)-3'-adenine ribonucleotide + diphosphate. In terms of biological role, has a role in the RNA interference (RNAi) pathway which is important for heterochromatin formation and accurate chromosome segregation. A member of the RNA-directed RNA polymerase complex (RDRC) which is involved in the generation of small interfering RNAs (siRNAs) and mediate their association with the RNA-induced transcriptional silencing (RITS) complex. RITS acts as a priming complex for dsRNA synthesis at the site of non-coding centromeric RNA. The sequence is that of Poly(A) RNA polymerase cid12 (cid12) from Schizosaccharomyces pombe (strain 972 / ATCC 24843) (Fission yeast).